A 431-amino-acid polypeptide reads, in one-letter code: 3-isopropylmalate dehydratase large subunit (431 aa).

[4Fe-4S] cluster contacts are provided by Cys-300, Cys-360, and Cys-363.

The protein belongs to the aconitase/IPM isomerase family. LeuC type 2 subfamily. Heterodimer of LeuC and LeuD. [4Fe-4S] cluster serves as cofactor.

The catalysed reaction is (2R,3S)-3-isopropylmalate = (2S)-2-isopropylmalate. It participates in amino-acid biosynthesis; L-leucine biosynthesis; L-leucine from 3-methyl-2-oxobutanoate: step 2/4. Functionally, catalyzes the isomerization between 2-isopropylmalate and 3-isopropylmalate, via the formation of 2-isopropylmaleate. This is 3-isopropylmalate dehydratase large subunit from Sulfurihydrogenibium sp. (strain YO3AOP1).